A 277-amino-acid chain; its full sequence is 4-hydroxy-3-methylbut-2-enyl diphosphate reductase (277 aa).

Cysteine 12 is a [4Fe-4S] cluster binding site. Positions 36 and 70 each coordinate (2E)-4-hydroxy-3-methylbut-2-enyl diphosphate. Positions 36 and 70 each coordinate dimethylallyl diphosphate. Residues histidine 36 and histidine 70 each contribute to the isopentenyl diphosphate site. Cysteine 92 provides a ligand contact to [4Fe-4S] cluster. Histidine 120 contributes to the (2E)-4-hydroxy-3-methylbut-2-enyl diphosphate binding site. Histidine 120 is a dimethylallyl diphosphate binding site. An isopentenyl diphosphate-binding site is contributed by histidine 120. The Proton donor role is filled by glutamate 122. Threonine 158 contacts (2E)-4-hydroxy-3-methylbut-2-enyl diphosphate. Cysteine 186 is a binding site for [4Fe-4S] cluster. Residues serine 214, asparagine 216, and serine 258 each contribute to the (2E)-4-hydroxy-3-methylbut-2-enyl diphosphate site. Residues serine 214, asparagine 216, and serine 258 each coordinate dimethylallyl diphosphate. Isopentenyl diphosphate-binding residues include serine 214, asparagine 216, and serine 258.

Belongs to the IspH family. It depends on [4Fe-4S] cluster as a cofactor.

The catalysed reaction is isopentenyl diphosphate + 2 oxidized [2Fe-2S]-[ferredoxin] + H2O = (2E)-4-hydroxy-3-methylbut-2-enyl diphosphate + 2 reduced [2Fe-2S]-[ferredoxin] + 2 H(+). The enzyme catalyses dimethylallyl diphosphate + 2 oxidized [2Fe-2S]-[ferredoxin] + H2O = (2E)-4-hydroxy-3-methylbut-2-enyl diphosphate + 2 reduced [2Fe-2S]-[ferredoxin] + 2 H(+). Its pathway is isoprenoid biosynthesis; dimethylallyl diphosphate biosynthesis; dimethylallyl diphosphate from (2E)-4-hydroxy-3-methylbutenyl diphosphate: step 1/1. It participates in isoprenoid biosynthesis; isopentenyl diphosphate biosynthesis via DXP pathway; isopentenyl diphosphate from 1-deoxy-D-xylulose 5-phosphate: step 6/6. Its function is as follows. Catalyzes the conversion of 1-hydroxy-2-methyl-2-(E)-butenyl 4-diphosphate (HMBPP) into a mixture of isopentenyl diphosphate (IPP) and dimethylallyl diphosphate (DMAPP). Acts in the terminal step of the DOXP/MEP pathway for isoprenoid precursor biosynthesis. In Campylobacter jejuni subsp. jejuni serotype O:2 (strain ATCC 700819 / NCTC 11168), this protein is 4-hydroxy-3-methylbut-2-enyl diphosphate reductase.